Reading from the N-terminus, the 368-residue chain is D-alanine--D-alanine ligase (368 aa).

An ATP-grasp domain is found at 151 to 358 (KKLLAAEGLP…YRTLISTLVD (208 aa)). 179-234 (KAELGLPVFVKPARGGSSIGITRVSNWDGLDGAIAHARLHDPKVIVEGAIIGREVE) provides a ligand contact to ATP. Mg(2+) contacts are provided by D313, E325, and N327.

Belongs to the D-alanine--D-alanine ligase family. The cofactor is Mg(2+). Requires Mn(2+) as cofactor.

The protein resides in the cytoplasm. The enzyme catalyses 2 D-alanine + ATP = D-alanyl-D-alanine + ADP + phosphate + H(+). Its pathway is cell wall biogenesis; peptidoglycan biosynthesis. Its function is as follows. Cell wall formation. The polypeptide is D-alanine--D-alanine ligase (Rhodococcus erythropolis (strain PR4 / NBRC 100887)).